Consider the following 493-residue polypeptide: GTPase Der (493 aa).

One can recognise an EngA-type G 1 domain in the interval 3–166; that stretch reads PVIALVGRPN…EALGIFPKDN (164 aa). GTP-binding positions include 9 to 16, 56 to 60, and 118 to 121; these read GRPNVGKS, DTGGI, and NKVD. Over residues 167 to 184 the composition is skewed to acidic residues; the sequence is VEEEGEGEPASEEVAEGE. The disordered stretch occupies residues 167-195; that stretch reads VEEEGEGEPASEEVAEGEEPTRIPGPSEK. Residues 198–371 enclose the EngA-type G 2 domain; sequence IKIAIIGRPN…SVQESFRSAV (174 aa). GTP is bound by residues 204-211, 251-255, and 316-319; these read GRPNVGKS, DTAGV, and NKWD. A KH-like domain is found at 372-456; sequence TRWPTSRLTS…PIRIEYKGGE (85 aa). A compositionally biased stretch (basic and acidic residues) spans 454–463; the sequence is GGENPYEGKK. A disordered region spans residues 454-493; the sequence is GGENPYEGKKNSLTARQVNKKRRLMSHHKKAEKKKKDKRR. A compositionally biased stretch (basic residues) spans 471-493; the sequence is VNKKRRLMSHHKKAEKKKKDKRR.

Belongs to the TRAFAC class TrmE-Era-EngA-EngB-Septin-like GTPase superfamily. EngA (Der) GTPase family. In terms of assembly, associates with the 50S ribosomal subunit.

GTPase that plays an essential role in the late steps of ribosome biogenesis. The sequence is that of GTPase Der from Pseudomonas aeruginosa (strain LESB58).